The following is a 206-amino-acid chain: Ribonuclease HII (206 aa).

Residues 14–206 (EFICGIDEVG…FKLRQLGEKV (193 aa)) form the RNase H type-2 domain. 3 residues coordinate a divalent metal cation: D20, E21, and D117.

This sequence belongs to the RNase HII family. It depends on Mn(2+) as a cofactor. The cofactor is Mg(2+).

It is found in the cytoplasm. It carries out the reaction Endonucleolytic cleavage to 5'-phosphomonoester.. Endonuclease that specifically degrades the RNA of RNA-DNA hybrids. In Chlorobium chlorochromatii (strain CaD3), this protein is Ribonuclease HII.